The following is a 399-amino-acid chain: Yellow-related salivary protein LJM11 (399 aa).

The signal sequence occupies residues 1-18; it reads MKVFFSIFTLVLFQGTLG. An intrachain disulfide couples cysteine 115 to cysteine 186. The N-linked (GlcNAc...) asparagine glycan is linked to asparagine 213. Cysteine 319 and cysteine 395 are disulfide-bonded. Serotonin contacts are provided by threonine 345, asparagine 360, and phenylalanine 362.

The protein belongs to the major royal jelly protein family. Salivary gland (at protein level).

The protein localises to the secreted. Probably modulates blood feeding of sand flies on vertebrate species by binding and sequestering different mediators involved in the host response. Binds biogenic amines. Binds serotonin with high affinity. Binds adrenaline and noradrenaline. Binds dopamine and octopamine. Poorly binds histamine. Induces a delayed type hypersensitivity response in host tissues. Induces systemic Th1 immune response in the host. Immunogenic; elicits antibody production in the host. Functions as a chemoattractant for host neutrophils; likely acts through a G-protein-coupled receptor and effect is dependent on calcium influx. Functionally, (Microbial infection) Modulates infection caused by Leishmania species in the host. The polypeptide is Yellow-related salivary protein LJM11 (Lutzomyia longipalpis (Sand fly)).